Reading from the N-terminus, the 424-residue chain is Serine hydroxymethyltransferase (424 aa).

(6S)-5,6,7,8-tetrahydrofolate contacts are provided by residues Leu123 and 127-129 (GHL). At Lys232 the chain carries N6-(pyridoxal phosphate)lysine. Glu245 contacts (6S)-5,6,7,8-tetrahydrofolate.

It belongs to the SHMT family. Homodimer. Pyridoxal 5'-phosphate is required as a cofactor.

The protein resides in the cytoplasm. The enzyme catalyses (6R)-5,10-methylene-5,6,7,8-tetrahydrofolate + glycine + H2O = (6S)-5,6,7,8-tetrahydrofolate + L-serine. The protein operates within one-carbon metabolism; tetrahydrofolate interconversion. It participates in amino-acid biosynthesis; glycine biosynthesis; glycine from L-serine: step 1/1. Its function is as follows. Catalyzes the reversible interconversion of serine and glycine with tetrahydrofolate (THF) serving as the one-carbon carrier. This reaction serves as the major source of one-carbon groups required for the biosynthesis of purines, thymidylate, methionine, and other important biomolecules. Also exhibits THF-independent aldolase activity toward beta-hydroxyamino acids, producing glycine and aldehydes, via a retro-aldol mechanism. The protein is Serine hydroxymethyltransferase of Kocuria rhizophila (strain ATCC 9341 / DSM 348 / NBRC 103217 / DC2201).